The chain runs to 251 residues: Transcriptional cofactor Bfc (251 aa).

As to quaternary structure, interacts with srp (via GATA-type Zn-finger domain); this interaction enhances srp binding to the promoter of crq/croquemort.

The protein resides in the nucleus. Its function is as follows. Transcriptional cofactor involved in efferocytosis. Together with srp mediates expression of the phagocytic receptor crq/croquemort in response to apoptotic cells, and is up-regulated by crq/croquemort in a positive feedback mechanism. Involved in macrophage engulfment and clearance of apoptotic cells during embryogenesis. The polypeptide is Transcriptional cofactor Bfc (Drosophila melanogaster (Fruit fly)).